The sequence spans 319 residues: ATP-dependent 6-phosphofructokinase (319 aa).

Glycine 11 lines the ATP pocket. 21–25 (RAVVR) contributes to the ADP binding site. Residues 72–73 (RC) and 102–105 (GDGS) each bind ATP. Aspartate 103 is a Mg(2+) binding site. A substrate-binding site is contributed by 125–127 (TID). Aspartate 127 functions as the Proton acceptor in the catalytic mechanism. Arginine 154 contributes to the ADP binding site. Residues arginine 162 and 169-171 (MGR) contribute to the substrate site. Residues 185-187 (GAE), arginine 211, and 213-215 (KKH) each bind ADP. Residues glutamate 222, arginine 243, and 249–252 (HIQR) contribute to the substrate site.

The protein belongs to the phosphofructokinase type A (PFKA) family. ATP-dependent PFK group I subfamily. Prokaryotic clade 'B1' sub-subfamily. As to quaternary structure, homotetramer. Mg(2+) serves as cofactor.

It is found in the cytoplasm. The enzyme catalyses beta-D-fructose 6-phosphate + ATP = beta-D-fructose 1,6-bisphosphate + ADP + H(+). It functions in the pathway carbohydrate degradation; glycolysis; D-glyceraldehyde 3-phosphate and glycerone phosphate from D-glucose: step 3/4. With respect to regulation, allosterically activated by ADP and other diphosphonucleosides, and allosterically inhibited by phosphoenolpyruvate. Functionally, catalyzes the phosphorylation of D-fructose 6-phosphate to fructose 1,6-bisphosphate by ATP, the first committing step of glycolysis. This is ATP-dependent 6-phosphofructokinase from Shouchella clausii (strain KSM-K16) (Alkalihalobacillus clausii).